A 430-amino-acid chain; its full sequence is Dihydrolipoyllysine-residue acetyltransferase component of pyruvate dehydrogenase complex (430 aa).

Positions 2–77 (AFEFRLPDIG…VVGDVIVKID (76 aa)) constitute a Lipoyl-binding domain. N6-lipoyllysine is present on Lys43. A disordered region spans residues 80 to 122 (DAEDMQFKGHDDDSSSKEEPAKEEAPAEQAPVATQTEEVDENR). A compositionally biased stretch (basic and acidic residues) spans 84–104 (MQFKGHDDDSSSKEEPAKEEA). In terms of domain architecture, Peripheral subunit-binding (PSBD) spans 125–162 (KAMPSVRKYAREKGVNIKAVSGSGKNGRITKEDVDAYL). Residues 165–199 (GAPTASNESAASATNEEVAETPAAPAAVSLEGDFP) form a disordered region. Over residues 168 to 192 (TASNESAASATNEEVAETPAAPAAV) the composition is skewed to low complexity. His401 is an active-site residue.

It belongs to the 2-oxoacid dehydrogenase family. Forms a 24-polypeptide structural core with octahedral symmetry. It depends on (R)-lipoate as a cofactor.

It carries out the reaction N(6)-[(R)-dihydrolipoyl]-L-lysyl-[protein] + acetyl-CoA = N(6)-[(R)-S(8)-acetyldihydrolipoyl]-L-lysyl-[protein] + CoA. Its function is as follows. The pyruvate dehydrogenase complex catalyzes the overall conversion of pyruvate to acetyl-CoA and CO(2). It contains multiple copies of three enzymatic components: pyruvate dehydrogenase (E1), dihydrolipoamide acetyltransferase (E2) and lipoamide dehydrogenase (E3). The chain is Dihydrolipoyllysine-residue acetyltransferase component of pyruvate dehydrogenase complex (pdhC) from Staphylococcus aureus (strain MRSA252).